The following is a 92-amino-acid chain: UPF0125 protein NMA1005 (92 aa).

Belongs to the UPF0125 (RnfH) family.

The protein is UPF0125 protein NMA1005 of Neisseria meningitidis serogroup A / serotype 4A (strain DSM 15465 / Z2491).